The primary structure comprises 842 residues: Protein translocase subunit SecA (842 aa).

ATP is bound by residues Q85, 103-107 (GEGKT), and D493. Residues C825, C827, C836, and H837 each coordinate Zn(2+).

Belongs to the SecA family. In terms of assembly, monomer and homodimer. Part of the essential Sec protein translocation apparatus which comprises SecA, SecYEG and auxiliary proteins SecDF. Other proteins may also be involved. The cofactor is Zn(2+).

The protein resides in the cell membrane. It is found in the cytoplasm. The catalysed reaction is ATP + H2O + cellular proteinSide 1 = ADP + phosphate + cellular proteinSide 2.. Its function is as follows. Part of the Sec protein translocase complex. Interacts with the SecYEG preprotein conducting channel. Has a central role in coupling the hydrolysis of ATP to the transfer of proteins into and across the cell membrane, serving as an ATP-driven molecular motor driving the stepwise translocation of polypeptide chains across the membrane. This is Protein translocase subunit SecA from Streptococcus equi subsp. zooepidemicus (strain MGCS10565).